The sequence spans 283 residues: Cuticle collagen 49 (283 aa).

The signal sequence occupies residues 1 to 19; it reads MWKFVIGSVSTAAFFVSVC. The interval 90 to 283 is disordered; it reads EPTKNCPAGP…GYCTCPPRTA (194 aa). The segment covering 127–139 has biased composition (basic and acidic residues); sequence VVIHDMPNPKECI. A compositionally biased stretch (pro residues) spans 143–155; the sequence is AGPPGPPGPPGPL. Low complexity predominate over residues 185–204; that stretch reads QGPPGSAGRAGPRGQAGQPG. Positions 213-271 constitute a Collagen-like domain; that stretch reads GRPGPQGPLGEPGAQGEPGVDGKDGALGAPGRKAENGRPGKRGKDGVAGVPGTRGKEGE. Residues 244–257 are compositionally biased toward basic and acidic residues; the sequence is RKAENGRPGKRGKD.

This sequence belongs to the cuticular collagen family. As to quaternary structure, collagen polypeptide chains are complexed within the cuticle by disulfide bonds and other types of covalent cross-links.

Its function is as follows. Probable cuticular collagen-like protein. Nematode cuticles are composed largely of collagen-like proteins. The cuticle functions both as an exoskeleton and as a barrier to protect the worm from its environment. Acts downstream of the Wnt signaling pathway, perhaps in the formation of the adult cuticle. The sequence is that of Cuticle collagen 49 from Caenorhabditis elegans.